Consider the following 461-residue polypeptide: Propanal dehydrogenase (CoA-propanoylating) (461 aa).

Residues 1 to 18 (MNTSELETLIRNILSEQL) are targets protein to the BMC.

This sequence belongs to the EutE/PduP family. In terms of assembly, interacts with PduK, probably with its BMC-containing N-terminus. Interacts with shell proteins PduA and PduJ, interacts with PduQ.

Its subcellular location is the bacterial microcompartment. The enzyme catalyses propanal + NAD(+) + CoA = propanoyl-CoA + NADH + H(+). The protein operates within polyol metabolism; 1,2-propanediol degradation. Functionally, a CoA-acylating aldehyde dehydrogenase required for optimal 1,2-propanediol (1,2-PD) degradation. Optimizes growth in the bacterial microcompartment (BMC) dedicated to 1,2-PD degradation by minimizing propionaldehyde toxicity. NAD(+) and NADH are regenerated internally within the Pdu BMC by the PduP and PduQ enzymes, which reduce NAD(+) and oxidize NADH respectively, although there must also be cofactor transport across the BMC. Directly targeted to the BMC. Expression of a cosmid containing the full 21-gene pdu operon in E.coli allows E.coli to grow on 1,2-propanediol (1,2-PD) with the appearance of bacterial microcompartments (BMC) in its cytoplasm. In terms of biological role, the 1,2-PD-specific bacterial microcompartment (BMC) concentrates low levels of 1,2-PD catabolic enzymes, concentrates volatile reaction intermediates thus enhancing pathway flux and keeps the level of toxic, mutagenic propionaldehyde low. In Citrobacter freundii, this protein is Propanal dehydrogenase (CoA-propanoylating).